A 280-amino-acid polypeptide reads, in one-letter code: Glycoprotein G (280 aa).

An N-terminal signal peptide occupies residues 1-24 (MGHSGENVLCVALLAIYLAAGGAA). N85 and N111 each carry an N-linked (GlcNAc...) asparagine; by host glycan. The interval 191–218 (ESSEERVVATDSDSGSCEDDEKEEKSDC) is disordered.

This sequence belongs to the alphaherpesvirinae glycoprotein G family.

This chain is Glycoprotein G (gG), found in Psittacid herpesvirus 1 (isolate Amazon parrot/-/97-0001/1997) (PsHV-1).